Here is a 194-residue protein sequence, read N- to C-terminus: Aminodeoxychorismate/anthranilate synthase component 2 (194 aa).

The region spanning 1–194 (MILMIDNYDS…IETYRKEVIA (194 aa)) is the Glutamine amidotransferase type-1 domain. Residues Cys79, His168, and Glu170 contribute to the active site.

In terms of assembly, monomer. Heterodimer consisting of two non-identical subunits: a glutamine amidotransferase subunit (PabA) and a aminodeoxychorismate synthase subunit (PabB).

The catalysed reaction is chorismate + L-glutamine = anthranilate + pyruvate + L-glutamate + H(+). It catalyses the reaction chorismate + L-glutamine = 4-amino-4-deoxychorismate + L-glutamate. The protein operates within amino-acid biosynthesis; L-tryptophan biosynthesis; L-tryptophan from chorismate: step 1/5. It participates in cofactor biosynthesis; tetrahydrofolate biosynthesis; 4-aminobenzoate from chorismate: step 1/2. Part of a heterodimeric complex that catalyzes the two-step biosynthesis of 4-amino-4-deoxychorismate (ADC), a precursor of p-aminobenzoate (PABA) and tetrahydrofolate. In the first step, a glutamine amidotransferase (PabA) generates ammonia as a substrate that, along with chorismate, is used in the second step, catalyzed by aminodeoxychorismate synthase (PabB) to produce ADC. PabA converts glutamine into glutamate only in the presence of stoichiometric amounts of PabB. Also involved in the biosynthesis of anthranilate. Complements a glutamine amidotransferase-negative mutant. This Bacillus subtilis (strain 168) protein is Aminodeoxychorismate/anthranilate synthase component 2.